The chain runs to 341 residues: Muscleblind-like protein 1 (341 aa).

At T6 the chain carries Phosphothreonine. 4 C3H1-type zinc fingers span residues 13–41 (WLTLEVCREFQRGTCSRPDTECKFAHPSK), 47–73 (NGRVIACFDSLKGRCSRENCKYLHPPP), 178–206 (TDRLEVCREYQRGNCNRGENDCRFAHPAD), and 214–240 (DNTVTVCMDYIKGRCSREKCKYFHPPA).

The protein belongs to the muscleblind family. As to quaternary structure, interacts with DDX1 and YBX1. Interacts with HNRNPH1; the interaction in RNA-independent. Interacts with RBPMS; the interaction allows cooperative assembly of RNA-bound stable cell-specific alternative splicing regulatory complexes. As to expression, highly expressed in cardiac and skeletal muscle. Weakly expressed in heart and eye (at protein level).

The protein localises to the nucleus. The protein resides in the cytoplasm. It localises to the cytoplasmic granule. In terms of biological role, mediates pre-mRNA alternative splicing regulation. Acts either as activator or repressor of splicing on specific pre-mRNA targets. Inhibits cardiac troponin-T (TNNT2) pre-mRNA exon inclusion but induces insulin receptor (IR) pre-mRNA exon inclusion in muscle. Antagonizes the alternative splicing activity pattern of CELF proteins. Regulates the TNNT2 exon 5 skipping through competition with U2AF2. Inhibits the formation of the spliceosome A complex on intron 4 of TNNT2 pre-mRNA. Binds to the stem-loop structure within the polypyrimidine tract of TNNT2 intron 4 during spliceosome assembly. Binds to the 5'-YGCU(U/G)Y-3'consensus sequence. Binds to the IR RNA. Binds to CUG triplet repeat expansion in myotonic dystrophy muscle cells by sequestering the target RNAs. Together with RNA binding proteins RBPMS and RBFOX2, activates vascular smooth muscle cells alternative splicing events. Regulates NCOR2 alternative splicing. This chain is Muscleblind-like protein 1 (Mbnl1), found in Mus musculus (Mouse).